An 875-amino-acid chain; its full sequence is Cytosolic phospholipase A2 epsilon (875 aa).

A disordered region spans residues 16–70 (THASEGHHGLGTSMLVPKNPQGEEDSKLGRNCSGFEDAQDPQTAVPSSPLLSMAS). The C2 domain maps to 60 to 183 (VPSSPLLSMA…CLRNKTHVKF (124 aa)). Low complexity predominate over residues 61 to 70 (PSSPLLSMAS). Ca(2+) contacts are provided by D97, D103, D153, D155, and D161. The region spanning 332 to 875 (PCSDTLDVRL…KKRMRSQCPS (544 aa)) is the PLA2c domain. S420 serves as the catalytic Nucleophile. Residue D708 is the Proton acceptor of the active site. S808 carries the post-translational modification Phosphoserine. Positions 865-875 (EKKRMRSQCPS) are required for localization at membrane structures.

Requires Ca(2+) as cofactor. Predominantly expressed in brain, heart, skeletal muscle, testis and thyroid. Expressed in neurons but not astrocytes or microglia. Expressed at lower level in stomach.

It is found in the cytoplasm. Its subcellular location is the cytosol. It localises to the early endosome membrane. The protein localises to the lysosome membrane. The protein resides in the cell membrane. It catalyses the reaction a 1,2-diacyl-sn-glycero-3-phosphoethanolamine + a 1,2-diacyl-sn-glycero-3-phosphocholine = an N-acyl-1,2-diacyl-sn-glycero-3-phosphoethanolamine + a 2-acyl-sn-glycero-3-phosphocholine + H(+). It carries out the reaction 1-hexadecanoyl-2-octadecanoyl-sn-glycero-3-phosphocholine + 1,2-di-(9Z-octadecenoyl)-sn-glycero-3-phosphoethanolamine = 2-octadecanoyl-sn-glycero-3-phosphocholine + N-hexadecanoyl-1,2-di-(9Z-octadecenoyl)-sn-glycero-3-phosphoethanolamine + H(+). The catalysed reaction is 1-octadecanoyl-2-hexadecanoyl-sn-glycero-3-phosphocholine + 1,2-di-(9Z-octadecenoyl)-sn-glycero-3-phosphoethanolamine = N-octadecanoyl-1,2-di-(9Z-octadecenoyl)-sn-glycero-3-phosphoethanolamine + 2-hexadecanoyl-sn-glycero-3-phosphocholine + H(+). The enzyme catalyses 1,2-di-(9Z-octadecenoyl)-sn-glycero-3-phosphoethanolamine + 1,2-dihexadecanoyl-sn-glycero-3-phosphocholine = N-hexadecanoyl-1,2-di-(9Z-octadecenoyl)-sn-glycero-3-phosphoethanolamine + 2-hexadecanoyl-sn-glycero-3-phosphocholine + H(+). It catalyses the reaction 1,2-di-(5Z,8Z,11Z,14Z-eicosatetraenoyl)-sn-glycero-3-phosphocholine + 1,2-di-(9Z-octadecenoyl)-sn-glycero-3-phosphoethanolamine = N-(5Z,8Z,11Z,14Z-eicosatetraenoyl)-1,2-di-(9Z-octadecenoyl)-sn-glycero-3-phosphoethanolamine + 2-(5Z,8Z,11Z,14Z)-eicosatetraenoyl-sn-glycero-3-phosphocholine + H(+). It carries out the reaction 2 1,2-di-(9Z-octadecenoyl)-sn-glycero-3-phosphoethanolamine = N,1,2-tri-(9Z-octadecenoyl)-sn-glycero-3-phosphoethanolamine + 2-(9Z-octadecenoyl)-sn-glycero-3-phosphoethanolamine + H(+). The catalysed reaction is a 1,2-diacyl-sn-glycero-3-phosphocholine + H2O = a 1-acyl-sn-glycero-3-phosphocholine + a fatty acid + H(+). The enzyme catalyses 1-(1Z-octadecenyl)-2-(9Z-octadecenoyl)-sn-glycero-3-phosphoethanolamine + 1,2-dihexadecanoyl-sn-glycero-3-phosphocholine = 1-O-(1Z-octadecenoyl)-2-(9Z-octadecenoyl)-sn-glycero-3-phospho-N-hexadecanoyl-ethanolamine + 2-hexadecanoyl-sn-glycero-3-phosphocholine + H(+). It catalyses the reaction 1-hexadecanoyl-2-(5Z,8Z,11Z,14Z-eicosatetraenoyl)-sn-glycero-3-phosphocholine + H2O = 1-hexadecanoyl-sn-glycero-3-phosphocholine + (5Z,8Z,11Z,14Z)-eicosatetraenoate + H(+). It carries out the reaction 1-hexadecanoyl-sn-glycero-3-phosphocholine + H2O = sn-glycerol 3-phosphocholine + hexadecanoate + H(+). Stimulated by cytosolic Ca(2+). Stimulated by anionic phospholipids such as phosphatidylserine. Calcium-dependent N-acyltransferase involved in the biosynthesis of N-acyl ethanolamines (NAEs) in the brain. Transfers the sn-1 fatty acyl chain of phosphatidylcholine (fatty acyl donor) to the amine group of phosphatidylethanolamine (fatty acyl acceptor) to generate N-acyl phosphatidylethanolamine (NAPE). Similarly can use plasmenylethanolamine as a fatty acyl acceptor to form N-acyl plasmenylethanolamine (N-Acyl-PlsEt). Both NAPE and N-Acyl-PlsEt can serve as precursors of bioactive NAEs like N-arachidonoyl phosphatidylethanolamine also called anandamide. Has weak phospholipase A2 and lysophospholipase activities. Regulates intracellular membrane trafficking that requires modulation of membrane curvature as it occurs by enrichment in lysophospholipids. Promotes tubule formation involved in clathrin-independent endocytotic trafficking and cargo recycling. The protein is Cytosolic phospholipase A2 epsilon (Pla2g4e) of Mus musculus (Mouse).